Consider the following 291-residue polypeptide: MNIRGAPDLGQPSDDPNSGGERERIRQRMKMVIGQLEGILRELKEVAKELREVVSQIDKLTSDFDFELEPDDWTTATVSSTSSSDKAGAGGPFDLGHLDFMTADILSDSWEFCSFLDVSTPSDSVDGPEAPRPGTGPDYQLMNGGLPIPNGPRVETPDSSSEEAFSAGPAKGQVPQRTPGTRERVRFSDKVLYHALCCDDEEGDGEEVEEEEAGLAPELPRVEPHTGPLKPSPAPYKTKRSPLTTRRLGPTLAPEQTRRVTRNSSTQTVSDKSTQTVLPYTATKQKAKGKN.

Residues 1–25 form a disordered region; that stretch reads MNIRGAPDLGQPSDDPNSGGERERI. The stretch at 30–63 forms a coiled coil; sequence KMVIGQLEGILRELKEVAKELREVVSQIDKLTSD. Disordered stretches follow at residues 120–186 and 201–291; these read TPSD…ERVR and EEGD…KGKN. The segment covering 201 to 213 has biased composition (acidic residues); it reads EEGDGEEVEEEEA. Residues 262 to 284 show a composition bias toward polar residues; that stretch reads RNSSTQTVSDKSTQTVLPYTATK.

This sequence belongs to the INSYN1 family. As to quaternary structure, interacts with GPHN.

It localises to the postsynaptic density. Component of the protein machinery at the inhibitory synapses, probably acting as a scaffold. Inhibitory synapses dampen neuronal activity through postsynaptic hyperpolarization. This synaptic inhibition is fundamental for the functioning of the central nervous system, shaping and orchestrating the flow of information through neuronal networks to generate a precise neural code. This Rattus norvegicus (Rat) protein is Inhibitory synaptic factor 1 (Insyn1).